We begin with the raw amino-acid sequence, 355 residues long: Phosphate acyltransferase (355 aa).

This sequence belongs to the PlsX family. In terms of assembly, homodimer. Probably interacts with PlsY.

The protein localises to the cytoplasm. It carries out the reaction a fatty acyl-[ACP] + phosphate = an acyl phosphate + holo-[ACP]. It participates in lipid metabolism; phospholipid metabolism. Catalyzes the reversible formation of acyl-phosphate (acyl-PO(4)) from acyl-[acyl-carrier-protein] (acyl-ACP). This enzyme utilizes acyl-ACP as fatty acyl donor, but not acyl-CoA. This Erythrobacter litoralis (strain HTCC2594) protein is Phosphate acyltransferase.